An 888-amino-acid polypeptide reads, in one-letter code: MRTFYPSDSCKESQLDSLNPQSWLQVERGKLSSSASSSAPLCRESFIKVPEPQILPHYKPLDYVEVLAQIHEELDTCPLQERSILYLLQYQVFRGLGETKLRRRSLQSAWQEATTVHEKVVFGSWLRYEKQGEEVITDLLSSCGKYSEEFVPLDIASYFPATTASSPEAASVKTNRSVSKNVVFKIGEEKIACQRRKIASLSAPFHAMLYGNFTESLLDEIDMSENHVSSSAMRVVRDFSVVGVLIGVSKNLLLEVLVFANKFCCERLKDACDRELASLISSMECAIELMDFALEENSPILASSCLQVFLYEMPDSLNDERVVEVLTRVNRSQVSTMAGKAPFSLYSCLSEVSMCIDPRSDRTLGFLEKLVDFAENDRQQVLGFHRLGCMRLLRKEYREAEEAFETAFNLGHVYSATGLARLGYIQGHRLWAYEKLSSVISSVSPPLGWMYQERSFYCEGDKKLEDLEKATELDPTLTYPYMYRAVTRMSKQNAKAALEEINRILGFKLALECLEIRFCLYLGMDDYEAALRDIQAALTLCPDYRMFDGKVAGRQLQTLVYEHVENWTTADCWMQLYEKWSNVDDIGSLSVIYQMLESDACKGVLYFRQSLLLLRLNCPEAAMRSLQLAREHASSDHERLVYEGWILYDTGHCEEGLQKAKESIGIKRSFEAYFLQAYALAESSLDPSSSSTVVSLLEDALKCPSDRLRKGQALNNLGSVYVDCEKLDLAADCYINALKVRHTRAHQGLARVHFLRNDKAAAYEEMTRLIEKAQNNASAYEKRSEYCDRELAKSDLEMVTRLDPLRVYPYRYRAAVLMDSRKEREAITELSRAIAFKADLHLLHLRAAFHEHIGDVTSALRDCRAALSVDPNHQEMLELHSRVNSHEP.

Residues K180–I280 enclose the BTB domain. TPR repeat units lie at residues V381 to Y414, S441 to L477, L511 to Y544, H637 to F670, and G711 to R744. Residues L755–K793 adopt a coiled-coil conformation. 2 TPR repeats span residues V807–L840 and L842–H873.

It belongs to the ETO1 family. In terms of assembly, interacts with the C-terminal domain of ACS4, ACS5 and ACS9. In terms of tissue distribution, predominantly expressed in flowers.

The protein operates within protein modification; protein ubiquitination. Its function is as follows. Possible regulator of the ethylene pathway, which acts by regulating the stability of 1-aminocyclopropane-1-carboxylate synthase (ACS) enzymes. May act as a substrate-specific adapter that connects ACS enzymes, such as ACS5, to ubiquitin ligase complexes, leading to proteasomal degradation of ACS enzymes. The sequence is that of ETO1-like protein 1 (EOL1) from Arabidopsis thaliana (Mouse-ear cress).